Here is a 236-residue protein sequence, read N- to C-terminus: MKLNISYPINGTQKCIEIDDEHRVRVFYDKRIGQEVDGESVGDEFKGYVFKIAGGNDKQGFPMKQGVLLPTRVKLLLAKGHSCYRPRRNGERKRKSVRGAIVGPDLAVLALIITKKGEQEIEGITNDTVPKRLGPKRANNIRKFFGLTKEDDVRDYVIRREVTKGDKSYTKAPKIQRLVTPQRLQRKRQQKSLKIKNAQAQREAAAEYAQLLAKRLSERKAEKAEVRKRRASSLKA.

A phosphoserine mark is found at Ser-232 and Ser-233.

It belongs to the eukaryotic ribosomal protein eS6 family. Post-translationally, phosphorylated.

This chain is Small ribosomal subunit protein eS6 (RPS6), found in Kluyveromyces lactis (strain ATCC 8585 / CBS 2359 / DSM 70799 / NBRC 1267 / NRRL Y-1140 / WM37) (Yeast).